The primary structure comprises 270 residues: 4-hydroxy-tetrahydrodipicolinate reductase (270 aa).

NAD(+) contacts are provided by residues 11 to 16 and glutamate 37; that span reads GAGGRM. Residue arginine 38 participates in NADP(+) binding. Residues 101-103 and 125-128 each bind NAD(+); these read GTT and APNM. Histidine 158 serves as the catalytic Proton donor/acceptor. (S)-2,3,4,5-tetrahydrodipicolinate is bound at residue histidine 159. The Proton donor role is filled by lysine 162. Residue 168 to 169 participates in (S)-2,3,4,5-tetrahydrodipicolinate binding; the sequence is GT.

This sequence belongs to the DapB family.

The protein localises to the cytoplasm. It catalyses the reaction (S)-2,3,4,5-tetrahydrodipicolinate + NAD(+) + H2O = (2S,4S)-4-hydroxy-2,3,4,5-tetrahydrodipicolinate + NADH + H(+). It carries out the reaction (S)-2,3,4,5-tetrahydrodipicolinate + NADP(+) + H2O = (2S,4S)-4-hydroxy-2,3,4,5-tetrahydrodipicolinate + NADPH + H(+). Its pathway is amino-acid biosynthesis; L-lysine biosynthesis via DAP pathway; (S)-tetrahydrodipicolinate from L-aspartate: step 4/4. Catalyzes the conversion of 4-hydroxy-tetrahydrodipicolinate (HTPA) to tetrahydrodipicolinate. The polypeptide is 4-hydroxy-tetrahydrodipicolinate reductase (Shewanella putrefaciens (strain CN-32 / ATCC BAA-453)).